The following is a 513-amino-acid chain: ATP synthase subunit alpha (513 aa).

An ATP-binding site is contributed by 169–176; that stretch reads GDRQIGKT.

Belongs to the ATPase alpha/beta chains family. As to quaternary structure, F-type ATPases have 2 components, CF(1) - the catalytic core - and CF(0) - the membrane proton channel. CF(1) has five subunits: alpha(3), beta(3), gamma(1), delta(1), epsilon(1). CF(0) has three main subunits: a(1), b(2) and c(9-12). The alpha and beta chains form an alternating ring which encloses part of the gamma chain. CF(1) is attached to CF(0) by a central stalk formed by the gamma and epsilon chains, while a peripheral stalk is formed by the delta and b chains.

Its subcellular location is the cell inner membrane. It carries out the reaction ATP + H2O + 4 H(+)(in) = ADP + phosphate + 5 H(+)(out). Functionally, produces ATP from ADP in the presence of a proton gradient across the membrane. The alpha chain is a regulatory subunit. This Francisella tularensis subsp. holarctica (strain OSU18) protein is ATP synthase subunit alpha.